The sequence spans 281 residues: Phosphatidylglycerol--prolipoprotein diacylglyceryl transferase (281 aa).

Transmembrane regions (helical) follow at residues 29 to 49, 64 to 84, 100 to 120, and 124 to 144; these read FYSL…GKMI, LFFY…VLFY, GGMS…FVSW, and LNWL…MFLG. Position 145 (Arg145) interacts with a 1,2-diacyl-sn-glycero-3-phospho-(1'-sn-glycerol). Helical transmembrane passes span 180-200, 209-229, and 248-268; these read QLYQ…LLFW, GVLV…NEFF, and GQWL…YALT.

This sequence belongs to the Lgt family.

It is found in the cell inner membrane. It carries out the reaction L-cysteinyl-[prolipoprotein] + a 1,2-diacyl-sn-glycero-3-phospho-(1'-sn-glycerol) = an S-1,2-diacyl-sn-glyceryl-L-cysteinyl-[prolipoprotein] + sn-glycerol 1-phosphate + H(+). It functions in the pathway protein modification; lipoprotein biosynthesis (diacylglyceryl transfer). In terms of biological role, catalyzes the transfer of the diacylglyceryl group from phosphatidylglycerol to the sulfhydryl group of the N-terminal cysteine of a prolipoprotein, the first step in the formation of mature lipoproteins. In Erythrobacter litoralis (strain HTCC2594), this protein is Phosphatidylglycerol--prolipoprotein diacylglyceryl transferase.